The chain runs to 166 residues: Crossover junction endodeoxyribonuclease RuvC (166 aa).

Active-site residues include Asp-7, Glu-67, and Asp-139. 3 residues coordinate Mg(2+): Asp-7, Glu-67, and Asp-139.

This sequence belongs to the RuvC family. In terms of assembly, homodimer which binds Holliday junction (HJ) DNA. The HJ becomes 2-fold symmetrical on binding to RuvC with unstacked arms; it has a different conformation from HJ DNA in complex with RuvA. In the full resolvosome a probable DNA-RuvA(4)-RuvB(12)-RuvC(2) complex forms which resolves the HJ. Mg(2+) serves as cofactor.

The protein resides in the cytoplasm. The enzyme catalyses Endonucleolytic cleavage at a junction such as a reciprocal single-stranded crossover between two homologous DNA duplexes (Holliday junction).. Functionally, the RuvA-RuvB-RuvC complex processes Holliday junction (HJ) DNA during genetic recombination and DNA repair. Endonuclease that resolves HJ intermediates. Cleaves cruciform DNA by making single-stranded nicks across the HJ at symmetrical positions within the homologous arms, yielding a 5'-phosphate and a 3'-hydroxyl group; requires a central core of homology in the junction. The consensus cleavage sequence is 5'-(A/T)TT(C/G)-3'. Cleavage occurs on the 3'-side of the TT dinucleotide at the point of strand exchange. HJ branch migration catalyzed by RuvA-RuvB allows RuvC to scan DNA until it finds its consensus sequence, where it cleaves and resolves the cruciform DNA. In Paramagnetospirillum magneticum (strain ATCC 700264 / AMB-1) (Magnetospirillum magneticum), this protein is Crossover junction endodeoxyribonuclease RuvC.